We begin with the raw amino-acid sequence, 584 residues long: Arginine--tRNA ligase (584 aa).

Residues 127–137 (PNTNKPLHIGH) carry the 'HIGH' region motif.

It belongs to the class-I aminoacyl-tRNA synthetase family. As to quaternary structure, monomer.

The protein resides in the cytoplasm. The catalysed reaction is tRNA(Arg) + L-arginine + ATP = L-arginyl-tRNA(Arg) + AMP + diphosphate. The chain is Arginine--tRNA ligase from Borrelia hermsii (strain HS1 / DAH).